A 1179-amino-acid polypeptide reads, in one-letter code: ATP-dependent helicase/deoxyribonuclease subunit B (1179 aa).

It belongs to the helicase family. AddB/RexB type 2 subfamily. In terms of assembly, heterodimer of AddA and RexB. It depends on Mg(2+) as a cofactor.

In terms of biological role, the heterodimer acts as both an ATP-dependent DNA helicase and an ATP-dependent, dual-direction single-stranded exonuclease. Recognizes the chi site generating a DNA molecule suitable for the initiation of homologous recombination. This subunit has 5' -&gt; 3' nuclease activity but not helicase activity. This is ATP-dependent helicase/deoxyribonuclease subunit B from Lactobacillus delbrueckii subsp. bulgaricus (strain ATCC BAA-365 / Lb-18).